Reading from the N-terminus, the 112-residue chain is Nitrogen regulatory protein P-II (112 aa).

An O-UMP-tyrosine modification is found at Y51.

The protein belongs to the P(II) protein family. In terms of assembly, homotrimer.

Its function is as follows. In nitrogen-limiting conditions, when the ratio of Gln to 2-ketoglutarate decreases, P-II is uridylylated to P-II-UMP. P-II-UMP allows the deadenylation of glutamine synthetase (GS), thus activating the enzyme. Conversely, in nitrogen excess P-II is deuridylated and promotes the adenylation of GS. P-II indirectly controls the transcription of the GS gene (glnA). P-II prevents NR-II-catalyzed conversion of NR-I to NR-I-phosphate, the transcriptional activator of glnA. When P-II is uridylylated to P-II-UMP, these events are reversed. In Rhizobium etli (strain ATCC 51251 / DSM 11541 / JCM 21823 / NBRC 15573 / CFN 42), this protein is Nitrogen regulatory protein P-II (glnB).